The chain runs to 442 residues: HTH-type transcriptional regulator NorG (442 aa).

In terms of domain architecture, HTH gntR-type spans 2 to 46 (KIPSQRQLAIQYNVNRVTIIKSIELLEAEGFIYTKVGSGTYVNDY). The H-T-H motif DNA-binding region spans 6-25 (QRQLAIQYNVNRVTIIKSIE). Lysine 288 bears the N6-(pyridoxal phosphate)lysine mark.

The protein in the C-terminal section; belongs to the class-I pyridoxal-phosphate-dependent aminotransferase family. The cofactor is pyridoxal 5'-phosphate.

Functionally, positively regulates the expression of the NorB efflux pump and negatively regulates the expression of the AbcA efflux pump. Binds specifically to the promoters of norA, norB and norC and abcA genes. Could also have an aminotransferase activity. The sequence is that of HTH-type transcriptional regulator NorG (norG) from Staphylococcus aureus (strain bovine RF122 / ET3-1).